The primary structure comprises 921 residues: Ubiquitin carboxyl-terminal hydrolase 11 (921 aa).

A compositionally biased stretch (low complexity) spans 1–16 (MAAVAADPAAAAVPAS). The segment at 1 to 29 (MAAVAADPAAAAVPASAEDRETQPEAMPD) is disordered. The DUSP domain occupies 28 to 133 (PDLDQQWRQI…DQPPIERKVI (106 aa)). N6-acetyllysine is present on Lys-194. The 633-residue stretch at 257–889 (CGLTNLGNTC…AAYVLFYQRQ (633 aa)) folds into the USP domain. Residue Cys-266 is the Nucleophile of the active site. Positions 592-697 (TKPTSDDDDG…DRTTSPEEAQ (106 aa)) are disordered. Ser-596 carries the post-translational modification Phosphoserine. Positions 597-624 (DDDDGDEKGDENEDEDVEDDSSSEEEKE) are enriched in acidic residues. Composition is skewed to polar residues over residues 657 to 666 (LDNSLHTSQW) and 676 to 697 (FTLQ…EEAQ). At Ser-692 the chain carries Phosphoserine. The active-site Proton acceptor is the His-847. Residues 893–921 (RRQSQTASSETPTSPASSSTPNSDIMDVN) are disordered. Residues 895–915 (QSQTASSETPTSPASSSTPNS) show a composition bias toward low complexity. At Ser-906 the chain carries Phosphoserine.

This sequence belongs to the peptidase C19 family. As to quaternary structure, monomer. Associated component of the Polycomb group (PcG) multiprotein PRC1-like complex. Interacts with RANBP9/RANBPM. Interacts with BRCA2. Interacts with CHUK/IKKA. Interacts with NFKBIA. Interacts with SPRY3, RAE1, MYCBP2/PAM, and KCTD6.

It is found in the nucleus. Its subcellular location is the cytoplasm. The protein resides in the chromosome. The enzyme catalyses Thiol-dependent hydrolysis of ester, thioester, amide, peptide and isopeptide bonds formed by the C-terminal Gly of ubiquitin (a 76-residue protein attached to proteins as an intracellular targeting signal).. Its function is as follows. Protease that can remove conjugated ubiquitin from target proteins and polyubiquitin chains. Inhibits the degradation of target proteins by the proteasome. Cleaves preferentially 'Lys-6' and 'Lys-63'-linked ubiquitin chains. Has lower activity with 'Lys-11' and 'Lys-33'-linked ubiquitin chains, and extremely low activity with 'Lys-27', 'Lys-29' and 'Lys-48'-linked ubiquitin chains (in vitro). Plays a role in the regulation of pathways leading to NF-kappa-B activation. Plays a role in the regulation of DNA repair after double-stranded DNA breaks. Acts as a chromatin regulator via its association with the Polycomb group (PcG) multiprotein PRC1-like complex; may act by deubiquitinating components of the PRC1-like comple. Promotes cell proliferation by deubiquitinating phosphorylated E2F1x. The sequence is that of Ubiquitin carboxyl-terminal hydrolase 11 from Rattus norvegicus (Rat).